The sequence spans 511 residues: Inactive cytochrome P450 monooxygenase cloA (511 aa).

Residues 17-37 traverse the membrane as a helical segment; the sequence is ILLTAGLCVPCALVIHGIYNL. Residues N81 and N344 are each glycosylated (N-linked (GlcNAc...) asparagine). C450 serves as a coordination point for heme.

It belongs to the cytochrome P450 family. Heme is required as a cofactor.

It localises to the membrane. Functionally, inactive cytochrome P450 monooxygenase; part of the gene cluster that mediates the biosynthesis of fungal ergot alkaloid. DmaW catalyzes the first step of ergot alkaloid biosynthesis by condensing dimethylallyl diphosphate (DMAP) and tryptophan to form 4-dimethylallyl-L-tryptophan. The second step is catalyzed by the methyltransferase easF that methylates 4-dimethylallyl-L-tryptophan in the presence of S-adenosyl-L-methionine, resulting in the formation of 4-dimethylallyl-L-abrine. The catalase easC and the FAD-dependent oxidoreductase easE then transform 4-dimethylallyl-L-abrine to chanoclavine-I which is further oxidized by easD in the presence of NAD(+), resulting in the formation of chanoclavine-I aldehyde. Agroclavine dehydrogenase easG then mediates the conversion of chanoclavine-I aldehyde to agroclavine via a non-enzymatic adduct reaction: the substrate is an iminium intermediate that is formed spontaneously from chanoclavine-I aldehyde in the presence of glutathione. Further conversion of agroclavine to paspalic acid is a two-step process involving oxidation of agroclavine to elymoclavine and of elymoclavine to paspalic acid, the second step being performed by the elymoclavine oxidase cloA. However, cloA does not encode a functional enzyme indicating that C.fusiformis terminates its ergot alkaloid pathway at elymoclavine. The chain is Inactive cytochrome P450 monooxygenase cloA from Claviceps fusiformis (Ergot fungus).